Consider the following 163-residue polypeptide: Phosphopantetheine adenylyltransferase (163 aa).

Residue T9 participates in substrate binding. Residues 9–10 and H17 each bind ATP; that span reads TF. Residues K41, L76, and R90 each contribute to the substrate site. ATP contacts are provided by residues 91–93, E101, and 126–132; these read GLR and HQAIASR.

The protein belongs to the bacterial CoaD family. As to quaternary structure, homohexamer. Requires Mg(2+) as cofactor.

Its subcellular location is the cytoplasm. The catalysed reaction is (R)-4'-phosphopantetheine + ATP + H(+) = 3'-dephospho-CoA + diphosphate. It participates in cofactor biosynthesis; coenzyme A biosynthesis; CoA from (R)-pantothenate: step 4/5. Reversibly transfers an adenylyl group from ATP to 4'-phosphopantetheine, yielding dephospho-CoA (dPCoA) and pyrophosphate. This chain is Phosphopantetheine adenylyltransferase, found in Caulobacter vibrioides (strain ATCC 19089 / CIP 103742 / CB 15) (Caulobacter crescentus).